A 780-amino-acid chain; its full sequence is ATP-dependent 6-phosphofructokinase, muscle type (780 aa).

Residue threonine 2 is modified to N-acetylthreonine. The N-terminal catalytic PFK domain 1 stretch occupies residues 2 to 390; that stretch reads THEEHHAAKT…NWEVYKLLAH (389 aa). ATP is bound by residues glycine 25, 88 to 89, and 118 to 121; these read RC and GDGS. Residue aspartate 119 participates in Mg(2+) binding. Serine 133 carries the post-translational modification Phosphoserine. Substrate contacts are provided by residues 164–166, arginine 201, 208–210, glutamate 264, arginine 292, and 298–301; these read SID, MGR, and HVQR. The active-site Proton acceptor is aspartate 166. Position 377 is a phosphoserine (serine 377). The interdomain linker stretch occupies residues 391 to 401; the sequence is IRPPVSKSGSH. The interval 402–780 is C-terminal regulatory PFK domain 2; that stretch reads TVAVMNVGAP…SRKRSGEAPA (379 aa). Beta-D-fructose 2,6-bisphosphate contacts are provided by residues arginine 471 and 528 to 532; that span reads TVSNN. Serine 530 is a glycosylation site (O-linked (GlcNAc) serine). At lysine 557 the chain carries N6-(2-hydroxyisobutyryl)lysine. Beta-D-fructose 2,6-bisphosphate is bound by residues arginine 566, 573-575, glutamate 629, arginine 655, and 661-664; these read MGG and HMQQ. Serine 667 carries the phosphoserine modification. Arginine 735 provides a ligand contact to beta-D-fructose 2,6-bisphosphate. At serine 775 the chain carries Phosphoserine.

The protein belongs to the phosphofructokinase type A (PFKA) family. ATP-dependent PFK group I subfamily. Eukaryotic two domain clade 'E' sub-subfamily. In terms of assembly, homo- and heterotetramers. Phosphofructokinase (PFK) enzyme functions as a tetramer composed of different combinations of 3 types of subunits, called PFKM (M), PFKL (L) and PFKP (P). The composition of the PFK tetramer differs according to the tissue type it is present in. The kinetic and regulatory properties of the tetrameric enzyme are dependent on the subunit composition, hence can vary across tissues. Interacts (via C-terminus) with HK1 (via N-terminal spermatogenic cell-specific region). It depends on Mg(2+) as a cofactor. In terms of processing, glcNAcylation decreases enzyme activity.

It localises to the cytoplasm. The enzyme catalyses beta-D-fructose 6-phosphate + ATP = beta-D-fructose 1,6-bisphosphate + ADP + H(+). It functions in the pathway carbohydrate degradation; glycolysis; D-glyceraldehyde 3-phosphate and glycerone phosphate from D-glucose: step 3/4. Allosterically activated by ADP, AMP, or fructose 2,6-bisphosphate, and allosterically inhibited by ATP or citrate. In terms of biological role, catalyzes the phosphorylation of D-fructose 6-phosphate to fructose 1,6-bisphosphate by ATP, the first committing step of glycolysis. The sequence is that of ATP-dependent 6-phosphofructokinase, muscle type (PFKM) from Equus caballus (Horse).